The primary structure comprises 200 residues: UDP-N-acetylglucosamine transferase subunit ALG13 (200 aa).

The protein belongs to the glycosyltransferase 28 family. As to quaternary structure, heterodimer with ALG14 to form a functional enzyme.

It is found in the endoplasmic reticulum. It carries out the reaction an N-acetyl-alpha-D-glucosaminyl-diphospho-di-trans,poly-cis-dolichol + UDP-N-acetyl-alpha-D-glucosamine = an N,N'-diacetylchitobiosyl-diphospho-di-trans,poly-cis-dolichol + UDP + H(+). Involved in protein N-glycosylation. Essential for the second step of the dolichol-linked oligosaccharide pathway. The chain is UDP-N-acetylglucosamine transferase subunit ALG13 (ALG13) from Cryptococcus neoformans var. neoformans serotype D (strain B-3501A) (Filobasidiella neoformans).